The primary structure comprises 306 residues: Ribonuclease Z (306 aa).

Zn(2+) is bound by residues His63, His65, Asp67, His68, His140, Asp211, and His269. Asp67 acts as the Proton acceptor in catalysis.

Belongs to the RNase Z family. In terms of assembly, homodimer. Requires Zn(2+) as cofactor.

It catalyses the reaction Endonucleolytic cleavage of RNA, removing extra 3' nucleotides from tRNA precursor, generating 3' termini of tRNAs. A 3'-hydroxy group is left at the tRNA terminus and a 5'-phosphoryl group is left at the trailer molecule.. In terms of biological role, zinc phosphodiesterase, which displays some tRNA 3'-processing endonuclease activity. Probably involved in tRNA maturation, by removing a 3'-trailer from precursor tRNA. The sequence is that of Ribonuclease Z from Listeria innocua serovar 6a (strain ATCC BAA-680 / CLIP 11262).